A 145-amino-acid polypeptide reads, in one-letter code: Basic phospholipase A2 beta-bungarotoxin A-AL1 chain (145 aa).

A signal peptide spans 1-17 (MLIFLWCGAVCVSLLGA). A propeptide spanning residues 18–25 (ANIPPHPL) is cleaved from the precursor. 5 disulfide bridges follow: Cys52-Cys144, Cys54-Cys70, Cys76-Cys118, Cys86-Cys111, and Cys104-Cys116. Ca(2+) contacts are provided by Tyr53, Gly55, and Gly57. The active site involves His73. Asp119 is an active-site residue.

This sequence belongs to the phospholipase A2 family. Group I subfamily. G49 sub-subfamily. As to quaternary structure, heterodimer; disulfide-linked. The A chains have phospholipase A2 activity and the B chains show homology with the basic protease inhibitors. Requires Ca(2+) as cofactor. Post-translationally, this enzyme lacks one of the seven disulfide bonds found in similar PLA2 proteins. In terms of tissue distribution, expressed by the venom gland.

The protein localises to the secreted. It catalyses the reaction a 1,2-diacyl-sn-glycero-3-phosphocholine + H2O = a 1-acyl-sn-glycero-3-phosphocholine + a fatty acid + H(+). In terms of biological role, snake venom phospholipase A2 (PLA2) that inhibits neuromuscular transmission by blocking acetylcholine release from the nerve termini. PLA2 catalyzes the calcium-dependent hydrolysis of the 2-acyl groups in 3-sn-phosphoglycerides. The sequence is that of Basic phospholipase A2 beta-bungarotoxin A-AL1 chain from Bungarus multicinctus (Many-banded krait).